Here is a 141-residue protein sequence, read N- to C-terminus: Large ribosomal subunit protein bL17 (141 aa).

It belongs to the bacterial ribosomal protein bL17 family. In terms of assembly, part of the 50S ribosomal subunit. Contacts protein L32.

The protein is Large ribosomal subunit protein bL17 of Chlamydia trachomatis serovar D (strain ATCC VR-885 / DSM 19411 / UW-3/Cx).